The primary structure comprises 300 residues: Uricase (300 aa).

N-acetylalanine is present on Ala2. N6-acetyllysine; alternate is present on residues Lys6 and Lys19. Lys6 and Lys19 each carry N6-succinyllysine; alternate. Residue Lys19 is the Charge relay system of the active site. 2 positions are modified to N6-acetyllysine: Lys23 and Lys32. A phosphoserine mark is found at Ser35 and Ser59. Thr64 acts as the Charge relay system in catalysis. Urate contacts are provided by Thr64 and Asp65. Lys114, Lys118, and Lys160 each carry N6-acetyllysine. Phe166 contributes to the urate binding site. N6-acetyllysine is present on residues Lys171 and Lys181. Arg183 contributes to the urate binding site. N6-acetyllysine; alternate is present on residues Lys217 and Lys224. An N6-succinyllysine; alternate mark is found at Lys217 and Lys224. The residue at position 228 (Ser228) is a Phosphoserine. The urate site is built by Val231, Gln232, and Asn258. Residue His260 is the Charge relay system of the active site. Lys274 is subject to N6-acetyllysine. Tyr285 is subject to Phosphotyrosine. Positions 298 to 300 (SRL) match the Microbody targeting signal motif.

This sequence belongs to the uricase family.

It localises to the peroxisome. The catalysed reaction is urate + O2 + H2O = 5-hydroxyisourate + H2O2. It participates in purine metabolism; urate degradation; (S)-allantoin from urate: step 1/3. In terms of biological role, catalyzes the oxidation of uric acid to 5-hydroxyisourate, which is further processed to form (S)-allantoin. In Oryctolagus cuniculus (Rabbit), this protein is Uricase (UOX).